Reading from the N-terminus, the 261-residue chain is Cytochrome c oxidase subunit 3 (261 aa).

The Mitochondrial matrix portion of the chain corresponds to 1 to 15 (MTRQTHAYHMVNPSP). A helical membrane pass occupies residues 16–34 (WPLTGALSALLMTSGLIMW). Topologically, residues 35 to 40 (FHFNST) are mitochondrial intermembrane. Residues 41–66 (ILLMLGLTTNMLTMYQWWRDVIREST) traverse the membrane as a helical segment. Residues 67–72 (FQGHHT) are Mitochondrial matrix-facing. Residues 73-105 (PNVQKGLRYGMILFIISEVLFFTGFFWAFYHSS) form a helical membrane-spanning segment. The Mitochondrial intermembrane portion of the chain corresponds to 106-128 (LAPTPELGGCWPPTGIHPLNPLE). The chain crosses the membrane as a helical span at residues 129–152 (VPLLNTSVLLASGVSITWAHHSLM). The Mitochondrial matrix portion of the chain corresponds to 153–155 (EGN). The helical transmembrane segment at 156–183 (RNHMLQALFITIALGVYFTLLQASEYYE) threads the bilayer. The Mitochondrial intermembrane portion of the chain corresponds to 184 to 190 (APFTISD). Residues 191–223 (GVYGSTFFVATGFHGLHVIIGSTFLIVCFFRQL) form a helical membrane-spanning segment. Over 224–232 (KFHFTSNHH) the chain is Mitochondrial matrix. The helical transmembrane segment at 233 to 256 (FGFEAAAWYWHFVDVVWLFLYVSI) threads the bilayer. Residues 257-261 (YWWGS) are Mitochondrial intermembrane-facing.

The protein belongs to the cytochrome c oxidase subunit 3 family. As to quaternary structure, component of the cytochrome c oxidase (complex IV, CIV), a multisubunit enzyme composed of 14 subunits. The complex is composed of a catalytic core of 3 subunits MT-CO1, MT-CO2 and MT-CO3, encoded in the mitochondrial DNA, and 11 supernumerary subunits COX4I, COX5A, COX5B, COX6A, COX6B, COX6C, COX7A, COX7B, COX7C, COX8 and NDUFA4, which are encoded in the nuclear genome. The complex exists as a monomer or a dimer and forms supercomplexes (SCs) in the inner mitochondrial membrane with NADH-ubiquinone oxidoreductase (complex I, CI) and ubiquinol-cytochrome c oxidoreductase (cytochrome b-c1 complex, complex III, CIII), resulting in different assemblies (supercomplex SCI(1)III(2)IV(1) and megacomplex MCI(2)III(2)IV(2)).

It localises to the mitochondrion inner membrane. The catalysed reaction is 4 Fe(II)-[cytochrome c] + O2 + 8 H(+)(in) = 4 Fe(III)-[cytochrome c] + 2 H2O + 4 H(+)(out). In terms of biological role, component of the cytochrome c oxidase, the last enzyme in the mitochondrial electron transport chain which drives oxidative phosphorylation. The respiratory chain contains 3 multisubunit complexes succinate dehydrogenase (complex II, CII), ubiquinol-cytochrome c oxidoreductase (cytochrome b-c1 complex, complex III, CIII) and cytochrome c oxidase (complex IV, CIV), that cooperate to transfer electrons derived from NADH and succinate to molecular oxygen, creating an electrochemical gradient over the inner membrane that drives transmembrane transport and the ATP synthase. Cytochrome c oxidase is the component of the respiratory chain that catalyzes the reduction of oxygen to water. Electrons originating from reduced cytochrome c in the intermembrane space (IMS) are transferred via the dinuclear copper A center (CU(A)) of subunit 2 and heme A of subunit 1 to the active site in subunit 1, a binuclear center (BNC) formed by heme A3 and copper B (CU(B)). The BNC reduces molecular oxygen to 2 water molecules using 4 electrons from cytochrome c in the IMS and 4 protons from the mitochondrial matrix. This chain is Cytochrome c oxidase subunit 3 (MT-CO3), found in Eudorcas rufifrons (Red-fronted gazelle).